Consider the following 343-residue polypeptide: Glutamine synthetase (343 aa).

The GS beta-grasp domain occupies 3-87; that stretch reads FKAEYIWIDG…CEVLNIDLTP (85 aa). A GS catalytic domain is found at 92 to 343; it reads TRAALAEVAE…CSALEKAGQV (252 aa). Residues E113, E115, E174, and E181 each coordinate Mg(2+). Position 279 (E279) interacts with L-glutamate.

The protein belongs to the glutamine synthetase family. In terms of assembly, homooctamer and homotetramer. The cofactor is Mg(2+).

Its subcellular location is the cytoplasm. It catalyses the reaction L-glutamate + NH4(+) + ATP = L-glutamine + ADP + phosphate + H(+). In terms of biological role, catalyzes the ATP-dependent biosynthesis of glutamine from glutamate and ammonia. The sequence is that of Glutamine synthetase from Streptomyces viridochromogenes.